A 349-amino-acid chain; its full sequence is MSGATLEAYLASCTTHGDELSRDVAAVIQRLAKAALDIRKLVNQGALGTVFNGMHSGSNTDGDVQKDLDILCDDQFLSCLQGAPVACYASEELENPVLLDPAARLAVAIDPLDGSSNIDNNISIGTIFSVLPAAKGPDVDPSQSFLQPGNRQLAAGFFVYGPQTALVLSLGRGTEIFIFSSRLGCFVDAYKSVGIPDRANEFAINMSNYRHWEEAIRLYVDDCLAGSEGPRERDFNMRWIASLVAEAYRILVRGGIFLYPADSRKGYSHGRIRLVYEANPIAFIVENAGGSATTSVDRILDLVPESLHQRVPLVFGSRREVARITRYHVDPNMIGERAPLFGKRGLFRA.

4 residues coordinate Mg(2+): Glu-91, Asp-110, Leu-112, and Asp-113. Substrate-binding positions include 113-116 (DGSS) and Asn-205. Glu-277 serves as a coordination point for Mg(2+).

It belongs to the FBPase class 1 family. In terms of assembly, homotetramer. Mg(2+) is required as a cofactor.

It is found in the cytoplasm. It catalyses the reaction beta-D-fructose 1,6-bisphosphate + H2O = beta-D-fructose 6-phosphate + phosphate. It participates in carbohydrate biosynthesis; gluconeogenesis. The polypeptide is Fructose-1,6-bisphosphatase class 1 (Sinorhizobium medicae (strain WSM419) (Ensifer medicae)).